A 281-amino-acid chain; its full sequence is Survival motor neuron protein 1 (281 aa).

Disordered stretches follow at residues 1 to 20 (MANGAEDVVFCRGTGQSDDS) and 42 to 77 (ALKGEDGATPQENDNPGKKRKNNKKNKSRKRCNAAP). Position 14 is a phosphothreonine (threonine 14). Residues serine 17 and serine 20 each carry the phosphoserine modification. The span at 59 to 73 (KKRKNNKKNKSRKRC) shows a compositional bias: basic residues. In terms of domain architecture, Tudor spans 80-140 (EWQVGDSCYA…LTEPPDMDED (61 aa)). Over residues 145 to 159 (ANVKETESSTEESDR) the composition is skewed to basic and acidic residues. Residues 145 to 242 (ANVKETESST…PMSPDFGEDD (98 aa)) form a disordered region. Pro residues-rich tracts occupy residues 179-197 (MGPPSWFPSFPPGPPPPPP) and 212-235 (PSFPGWPPMIPLGPPMIPPPPPMS). The segment at 225–252 (PPMIPPPPPMSPDFGEDDEALGSMLISW) is P2 (binding site for SNRPB). Positions 264–279 (GLRQGRKEAAASKKSH) are required for interaction with SYNCRIP.

This sequence belongs to the SMN family. Homodimer. Component of an import snRNP complex composed of kpnb1, rnut1, smn1 and znf259. Part of the core SMN complex that contains smn1, gemin2/sip1, ddx20/gemin3, gemin4, gemin5, gemin6, gemin7, gemin8 and strap/unrip. Interacts with ddx20, fbl, nola1, rnut1, syncrip and with several spliceosomal snRNP core Sm proteins, including snrpb, snrpd1, snrpd2, snrpd3, snrpe and ilf3. Interacts with elavl4.

It is found in the nucleus. The protein localises to the gem. It localises to the cajal body. Its subcellular location is the cytoplasm. The protein resides in the cytoplasmic granule. It is found in the perikaryon. The protein localises to the cell projection. It localises to the neuron projection. Its subcellular location is the myofibril. The protein resides in the sarcomere. It is found in the z line. Its function is as follows. The SMN complex plays an essential role in spliceosomal snRNP assembly in the cytoplasm and is required for pre-mRNA splicing in the nucleus. It may also play a role in the metabolism of snoRNPs. Required in motor neurons and proprioceptive neurons to ensure correct U12 intron splicing and proper levels of tmem41b mRNA. Required for the maturation of motor neuron axonal branches and dendrites. This chain is Survival motor neuron protein 1 (smn1), found in Danio rerio (Zebrafish).